Consider the following 625-residue polypeptide: Thioredoxin domain-containing protein 6 (625 aa).

An NDK region spans residues 158 to 302; sequence KSYTVAIIKP…FFFPNFKISN (145 aa). A disordered region spans residues 594 to 625; sequence GETPETSASDISRNAAAQGDDPEQDESKEMEE. The span at 613–625 shows a compositional bias: acidic residues; it reads DDPEQDESKEMEE.

It belongs to the NDK family. In terms of assembly, monomer and homodimer.

It is found in the cytoplasm. It localises to the cytoskeleton. Its subcellular location is the cilium axoneme. The protein resides in the dynein axonemal particle. Functionally, may be a regulator of microtubule physiology. The sequence is that of Thioredoxin domain-containing protein 6 from Xenopus laevis (African clawed frog).